The sequence spans 146 residues: Ribonuclease H (146 aa).

The region spanning 4 to 145 is the RNase H type-1 domain; it reads ELNKVVVYTD…ADMLARSQIV (142 aa). Positions 13, 51, 73, and 137 each coordinate Mg(2+).

It belongs to the RNase H family. As to quaternary structure, monomer. Mg(2+) is required as a cofactor.

Its subcellular location is the cytoplasm. The catalysed reaction is Endonucleolytic cleavage to 5'-phosphomonoester.. Its function is as follows. Endonuclease that specifically degrades the RNA of RNA-DNA hybrids. The chain is Ribonuclease H from Ehrlichia ruminantium (strain Gardel).